Here is a 347-residue protein sequence, read N- to C-terminus: NADH-ubiquinone oxidoreductase chain 2 (347 aa).

10 helical membrane passes run 3 to 23, 25 to 45, 59 to 79, 93 to 115, 150 to 170, 178 to 198, 200 to 220, 240 to 260, 274 to 294, and 326 to 346; these read PLAL…TMMS, HWLT…PILM, YFMT…INLM, VASN…HFWV, NTNL…WGGL, ILAY…PFNP, LTLL…MILA, MTIM…LSGF, NSII…YFYM, and LPTL…ISML.

This sequence belongs to the complex I subunit 2 family. As to quaternary structure, core subunit of respiratory chain NADH dehydrogenase (Complex I) which is composed of 45 different subunits. Interacts with TMEM242.

It localises to the mitochondrion inner membrane. The enzyme catalyses a ubiquinone + NADH + 5 H(+)(in) = a ubiquinol + NAD(+) + 4 H(+)(out). In terms of biological role, core subunit of the mitochondrial membrane respiratory chain NADH dehydrogenase (Complex I) which catalyzes electron transfer from NADH through the respiratory chain, using ubiquinone as an electron acceptor. Essential for the catalytic activity and assembly of complex I. The chain is NADH-ubiquinone oxidoreductase chain 2 from Mammuthus primigenius (Siberian woolly mammoth).